The primary structure comprises 138 residues: Small ribosomal subunit protein uS11c (138 aa).

The tract at residues 1 to 24 is disordered; that stretch reads MAKAIPRSGSRRSGRIGSRKSTRR. A compositionally biased stretch (basic residues) spans 9 to 24; sequence GSRRSGRIGSRKSTRR.

Belongs to the universal ribosomal protein uS11 family. Part of the 30S ribosomal subunit.

It is found in the plastid. Its subcellular location is the chloroplast. This is Small ribosomal subunit protein uS11c from Panax ginseng (Korean ginseng).